We begin with the raw amino-acid sequence, 145 residues long: MKGLIQRVRHARVEVAGEIVGAIDQGLLVLVGVEREDDQARADKLLHKLLNYRVFGDEQGKMNRSLKDIGGGLLLVSQFTLAADTRSGLRPSFSSAAPPAHGEALYDYLLARARDQHPEVACGRFGAEMQVHLVNDGPVTFLLES.

The Gly-cisPro motif, important for rejection of L-amino acids motif lies at 137–138; that stretch reads GP.

The protein belongs to the DTD family. As to quaternary structure, homodimer.

It is found in the cytoplasm. The catalysed reaction is glycyl-tRNA(Ala) + H2O = tRNA(Ala) + glycine + H(+). The enzyme catalyses a D-aminoacyl-tRNA + H2O = a tRNA + a D-alpha-amino acid + H(+). In terms of biological role, an aminoacyl-tRNA editing enzyme that deacylates mischarged D-aminoacyl-tRNAs. Also deacylates mischarged glycyl-tRNA(Ala), protecting cells against glycine mischarging by AlaRS. Acts via tRNA-based rather than protein-based catalysis; rejects L-amino acids rather than detecting D-amino acids in the active site. By recycling D-aminoacyl-tRNA to D-amino acids and free tRNA molecules, this enzyme counteracts the toxicity associated with the formation of D-aminoacyl-tRNA entities in vivo and helps enforce protein L-homochirality. The chain is D-aminoacyl-tRNA deacylase from Stutzerimonas stutzeri (strain A1501) (Pseudomonas stutzeri).